The chain runs to 561 residues: Putative transport protein KPN78578_08530 (561 aa).

5 consecutive transmembrane segments (helical) span residues 8 to 28 (LLNGNYILLLFVVLALGLCLG), 37 to 57 (LGNSIGVLVVSLLLGQQHFAI), 66 to 86 (FMLFIFCVGVEAGPNFFSIFF), 94 to 114 (MLALVMVGSAMLIAMVLGKVF), and 158 to 178 (HLSLGYALTYLVGLVSLIVGA). 2 consecutive RCK C-terminal domains span residues 202–288 (LDTD…SFRN) and 292–373 (VFDR…RIGF). A run of 5 helical transmembrane segments spans residues 383-403 (LLAFCAFFIVGLMIGMITFQF), 406-426 (FSFGIGNAAGLLFAGIMLGFL), 447-467 (FGLMVFMAGVGLSAGAGINNG), 478-498 (AGLIVSLVPVVICFLFGAYVL), and 540-560 (AIANVLLTLAGTLIVIIWPGL).

It belongs to the AAE transporter (TC 2.A.81) family. YbjL subfamily.

The protein resides in the cell membrane. The polypeptide is Putative transport protein KPN78578_08530 (Klebsiella pneumoniae subsp. pneumoniae (strain ATCC 700721 / MGH 78578)).